A 264-amino-acid polypeptide reads, in one-letter code: Probable glycerol uptake facilitator protein (264 aa).

2 consecutive transmembrane segments (helical) span residues 13 to 33 and 51 to 71; these read WIGA…GAGS and TAAF…NSLF. The NPA 1 motif lies at 78 to 80; it reads NPA. Helical transmembrane passes span 104 to 124, 162 to 182, and 195 to 215; these read IPLL…GAML, FATE…AGSF, and VPML…GTAI. Positions 216-218 match the NPA 2 motif; sequence NPA. The helical transmembrane segment at 244-264 threads the bilayer; it reads IPVAAPLSASVILGVLVAVIV.

The protein belongs to the MIP/aquaporin (TC 1.A.8) family.

It localises to the cell membrane. It carries out the reaction glycerol(in) = glycerol(out). In terms of biological role, mediates glycerol diffusion across the cytoplasmic membrane via a pore-type mechanism. This Mycoplasma pneumoniae (strain ATCC 29342 / M129 / Subtype 1) (Mycoplasmoides pneumoniae) protein is Probable glycerol uptake facilitator protein (glpF).